The primary structure comprises 326 residues: Olfactory receptor 11H1 (326 aa).

The Extracellular portion of the chain corresponds to 1–44 (MCPLTLQVTGLMNVSEPNSSFAFVNEFILQGFSCEWTIQIFLFS). N-linked (GlcNAc...) asparagine glycans are attached at residues N13 and N18. A helical transmembrane segment spans residues 45 to 65 (LFTTTYALTITGNGAIAFVLW). Over 66 to 72 (CDRRLHT) the chain is Cytoplasmic. A helical membrane pass occupies residues 73-93 (PMYMFLGNFSFLEIWYVSSTV). Topologically, residues 94–112 (PKMLVNFLSEKKNISFAGC) are extracellular. N106 carries an N-linked (GlcNAc...) asparagine glycan. C112 and C194 form a disulfide bridge. Residues 113–133 (FLQFYFFFSLGTSECLLLTVM) form a helical membrane-spanning segment. Residues 134 to 158 (AFDQYLAICRPLLYPNIMTGHLYAK) are Cytoplasmic-facing. A helical membrane pass occupies residues 159 to 179 (LVILCWVCGFLWFLIPIVLIS). The Extracellular segment spans residues 180 to 216 (QMPFCGPNIIDHVVCDPGPRFALDCVSAPRIQLFCYT). The chain crosses the membrane as a helical span at residues 217–237 (LSSLVIFGNFLFIIGSYTLVL). Topologically, residues 238–259 (KAMLGMPSSTGRHKAFSTCGSH) are cytoplasmic. The helical transmembrane segment at 260-280 (LAVVSLCYSSLMVMYVSPGLG) threads the bilayer. Over 281–287 (HSTGMQK) the chain is Extracellular. A helical transmembrane segment spans residues 288–308 (IETLFYAMVTPLFNPLIYSLQ). The Cytoplasmic segment spans residues 309-326 (NKEIKAALRKVLGSSNII).

It belongs to the G-protein coupled receptor 1 family.

The protein localises to the cell membrane. In terms of biological role, odorant receptor. The protein is Olfactory receptor 11H1 (OR11H1) of Homo sapiens (Human).